Consider the following 776-residue polypeptide: Mitochondrial intermediate peptidase (776 aa).

Residues 1–28 (MFVRFYKRLDRQYIQSQRRWILSSNKCL) constitute a mitochondrion transit peptide. A disordered region spans residues 48-71 (DHWEESQAQNTSSEQDNKGKNSSY). The span at 53-71 (SQAQNTSSEQDNKGKNSSY) shows a compositional bias: polar residues. H567 lines the Zn(2+) pocket. Residue E568 is part of the active site. Zn(2+) contacts are provided by H571 and H574.

Belongs to the peptidase M3 family. Requires Zn(2+) as cofactor.

The protein resides in the mitochondrion matrix. It catalyses the reaction Release of an N-terminal octapeptide as second stage of processing of some proteins imported into the mitochondrion.. Cleaves proteins, imported into the mitochondrion, to their mature size. While most mitochondrial precursor proteins are processed to the mature form in one step by mitochondrial processing peptidase (MPP), the sequential cleavage by MIP of an octapeptide after initial processing by MPP is a required step for a subgroup of nuclear-encoded precursor proteins destined for the matrix or the inner membrane. The protein is Mitochondrial intermediate peptidase (OCT1) of Eremothecium gossypii (strain ATCC 10895 / CBS 109.51 / FGSC 9923 / NRRL Y-1056) (Yeast).